The chain runs to 234 residues: Probable porphobilinogen deaminase (234 aa).

This sequence belongs to the HMBS family.

The catalysed reaction is 4 porphobilinogen + H2O = hydroxymethylbilane + 4 NH4(+). It participates in porphyrin-containing compound metabolism; protoporphyrin-IX biosynthesis; coproporphyrinogen-III from 5-aminolevulinate: step 2/4. In terms of biological role, tetrapolymerization of the monopyrrole PBG into the hydroxymethylbilane pre-uroporphyrinogen in several discrete steps. The polypeptide is Probable porphobilinogen deaminase (hemC) (Chlamydia pneumoniae (Chlamydophila pneumoniae)).